The following is an 823-amino-acid chain: Putative ankyrin repeat domain-containing protein 20A4 (823 aa).

ANK repeat units lie at residues 66–95 (QHRT…QIDV), 99–128 (ENRT…NPNL), 132–161 (YGNT…HIEA), 165–194 (DNNT…SSHA), and 198–227 (LRRS…DVFA). Disordered regions lie at residues 301 to 343 (VPEK…EVED) and 356 to 405 (QTLR…NICD). Residues 371-384 (EQQRHERSEKKQPQ) are compositionally biased toward basic and acidic residues. 3 coiled-coil regions span residues 431 to 480 (KKLK…KQLE), 565 to 724 (EMIT…NNST), and 776 to 806 (FVLE…KTEV).

The chain is Putative ankyrin repeat domain-containing protein 20A4 from Homo sapiens (Human).